The following is a 171-amino-acid chain: Endoribonuclease YbeY (171 aa).

3 residues coordinate Zn(2+): His130, His134, and His140.

Belongs to the endoribonuclease YbeY family. Zn(2+) serves as cofactor.

It is found in the cytoplasm. In terms of biological role, single strand-specific metallo-endoribonuclease involved in late-stage 70S ribosome quality control and in maturation of the 3' terminus of the 16S rRNA. The protein is Endoribonuclease YbeY of Neisseria meningitidis serogroup C / serotype 2a (strain ATCC 700532 / DSM 15464 / FAM18).